The chain runs to 52 residues: Phospholamban (52 aa).

The residue at position 1 (methionine 1) is an N-acetylmethionine. The Cytoplasmic portion of the chain corresponds to 1 to 31 (MEKVQYLTRSAIRRASTIEMPQQARQNLQNL). At serine 16 the chain carries Phosphoserine; by PKA. At threonine 17 the chain carries Phosphothreonine; by CaMK2. Residues 32 to 52 (FINFCLILICLLLICIIVMLL) traverse the membrane as a helical segment. Cysteine 36 is lipidated: S-palmitoyl cysteine.

Belongs to the phospholamban family. As to quaternary structure, homopentamer. Can also form heterooligomers with other sarcoplasmic/endoplasmic reticulum calcium ATPase (SERCA) regulators ARLN, ERLN, SLN and STRIT1/DWORF. Monomer. Interacts with HAX1. Interacts as a monomer with ATP2A2; the interaction decreases ATP2A2 Ca(2+) affinity. Interacts with VMP1; VMP1 competes with PLN and SLN to prevent them from forming an inhibitory complex with ATP2A2. Interacts with S100A1 in a Ca(2+)-dependent manner. Post-translationally, phosphorylated at Thr-17 by CaMK2, and in response to beta-adrenergic stimulation. Phosphorylation by DMPK may stimulate sarcoplasmic reticulum calcium uptake in cardiomyocytes. Phosphorylation by PKA abolishes the inhibition of ATP2A2-mediated calcium uptake. In terms of processing, palmitoylated by ZDHHC16, promoting formation of the homopentamer. In elongated spermatids, proteolytically cleaved by SPPL2C which modulates intracellular Ca(2+) homeostasis. Expressed in testis (at protein level). In brain, expressed specifically in GABAergic GAD67+ neurons of the thalamic reticular nucleus where it colocalizes with ATP2A2/SERCA2 (at protein level). Expressed in the bladder and in the atria and ventricles of the heart.

The protein localises to the endoplasmic reticulum membrane. It localises to the sarcoplasmic reticulum membrane. It is found in the mitochondrion membrane. Its subcellular location is the membrane. In terms of biological role, reversibly inhibits the activity of ATP2A2/SERCA2 in cardiac sarcoplasmic reticulum by decreasing the apparent affinity of the ATPase for Ca(2+). Binds preferentially to the ATP-bound E1 conformational form of ATP2A2 which predominates at low Ca(2+) concentrations during the diastolic phase of the cardiac cycle. Inhibits ATP2A2 Ca(2+) affinity by disrupting its allosteric activation by ATP. Modulates the contractility of the heart muscle in response to physiological stimuli via its effects on ATP2A2. Modulates calcium re-uptake during muscle relaxation and plays an important role in calcium homeostasis in the heart muscle. The degree of ATP2A2 inhibition depends on the oligomeric state of PLN. ATP2A2 inhibition is alleviated by PLN phosphorylation. Also inhibits the activity of ATP2A3/SERCA3. Controls intracellular Ca(2+) levels in elongated spermatids and may play a role in germ cell differentiation. In the thalamic reticular nucleus of the brain, plays a role in the regulation of sleep patterns and executive functioning. The protein is Phospholamban of Mus musculus (Mouse).